A 485-amino-acid chain; its full sequence is BTB/POZ domain-containing protein YLR108C (485 aa).

The 96-residue stretch at glutamate 26–threonine 121 folds into the BTB domain.

Its subcellular location is the nucleus. This Saccharomyces cerevisiae (strain ATCC 204508 / S288c) (Baker's yeast) protein is BTB/POZ domain-containing protein YLR108C.